A 259-amino-acid chain; its full sequence is Insulin-induced gene 1 protein (259 aa).

Over 1-66 (MPRLHDHVWN…ARPGSWHHDL (66 aa)) the chain is Cytoplasmic. Positions 36–55 (PGVPEPEHAPRGQRAGTTGC) are disordered. Residues 67–89 (VQRSLVLFSFGVVLALVLNLLQI) traverse the membrane as a helical segment. Topologically, residues 90-108 (QRNVTLFPDEVIATIFSSA) are extracellular. The helical transmembrane segment at 109-126 (WWVPPCCGTAAAVVGLLY) threads the bilayer. The Cytoplasmic segment spans residues 127 to 141 (PCIDSHLGEPHKFKR). Residues K138 and K140 each participate in a glycyl lysine isopeptide (Lys-Gly) (interchain with G-Cter in ubiquitin) cross-link. Residues 142 to 164 (EWASVMRCIAVFVGINHASAKLD) form a helical membrane-spanning segment. The Extracellular portion of the chain corresponds to 165-167 (FAN). Residues 168 to 186 (NVQLSLTLAALSLGLWWTF) form a helical membrane-spanning segment. The Cytoplasmic segment spans residues 187-191 (DRSRS). S189 is modified (phosphoserine). A helical membrane pass occupies residues 192–213 (GLGLGITIAFLATLITQFLVYN). Topologically, residues 214–227 (GVYQYTSPDFLYIR) are extracellular. A helical membrane pass occupies residues 228-245 (SWLPCIFFSGGVTVGNIG). Residues 246–259 (RQLAMGVPEKPHSD) lie on the Cytoplasmic side of the membrane. Residues 253–259 (PEKPHSD) carry the KxHxx motif.

It belongs to the INSIG family. Interacts with SCAP; interaction is direct and only takes place in the presence of sterols; it prevents interaction between SCAP and the coat protein complex II (COPII). Associates with the SCAP-SREBP complex (composed of SCAP and SREBF1/SREBP1 or SREBF2/SREBP2); association is mediated via its interaction with SCAP and only takes place in the presence of sterols. Interaction with SCAP is mutually exclusive with PAQR3. Interacts with HMGCR (via its SSD); the interaction, accelerated by sterols, leads to the recruitment of HMGCR to AMFR/gp78 for its ubiquitination by the sterol-mediated ERAD pathway. Interacts with AMFR/gp78 (via its membrane domain); the interaction recruits HMCR at the ER membrane for its ubiquitination and degradation by the sterol-mediated ERAD pathway. Interacts with SOAT2/ACAT2; leading to promote recruitment of AMFR/gp78 and subsequent ubiquitination of SOAT2/ACAT2. Interacts with RNF139. Interacts with RNF145. In terms of processing, phosphorylation at Ser-189 by PCK1 reduces binding to oxysterol, disrupting the interaction between INSIG1 and SCAP, thereby promoting nuclear translocation of SREBP proteins (SREBF1/SREBP1 or SREBF2/SREBP2) and subsequent transcription of downstream lipogenesis-related genes. Post-translationally, ubiquitinated by AMFR/gp78 in response to sterol deprivation, leading to its degradation: when the SCAP-SREBP complex becomes dissociated from INSIG1, INSIG1 is then ubiquitinated and degraded in proteasomes. Although ubiquitination is required for rapid INSIG1 degradation, it is not required for release of the SCAP-SREBP complex. Ubiquitinated by RNF139.

It is found in the endoplasmic reticulum membrane. In terms of biological role, oxysterol-binding protein that mediates feedback control of cholesterol synthesis by controlling both endoplasmic reticulum to Golgi transport of SCAP and degradation of HMGCR. Acts as a negative regulator of cholesterol biosynthesis by mediating the retention of the SCAP-SREBP complex in the endoplasmic reticulum, thereby blocking the processing of sterol regulatory element-binding proteins (SREBPs) SREBF1/SREBP1 and SREBF2/SREBP2. Binds oxysterol, including 25-hydroxycholesterol, regulating interaction with SCAP and retention of the SCAP-SREBP complex in the endoplasmic reticulum. In presence of oxysterol, interacts with SCAP, retaining the SCAP-SREBP complex in the endoplasmic reticulum, thereby preventing SCAP from escorting SREBF1/SREBP1 and SREBF2/SREBP2 to the Golgi. Sterol deprivation or phosphorylation by PCK1 reduce oxysterol-binding, disrupting the interaction between INSIG1 and SCAP, thereby promoting Golgi transport of the SCAP-SREBP complex, followed by processing and nuclear translocation of SREBF1/SREBP1 and SREBF2/SREBP2. Also regulates cholesterol synthesis by regulating degradation of HMGCR: initiates the sterol-mediated ubiquitin-mediated endoplasmic reticulum-associated degradation (ERAD) of HMGCR via recruitment of the reductase to the ubiquitin ligases AMFR/gp78 and/or RNF139. Also regulates degradation of SOAT2/ACAT2 when the lipid levels are low: initiates the ubiquitin-mediated degradation of SOAT2/ACAT2 via recruitment of the ubiquitin ligases AMFR/gp78. The polypeptide is Insulin-induced gene 1 protein (Mus musculus (Mouse)).